Reading from the N-terminus, the 102-residue chain is Iron-sulfur cluster assembly protein CyaY (102 aa).

Belongs to the frataxin family.

Involved in iron-sulfur (Fe-S) cluster assembly. May act as a regulator of Fe-S biogenesis. In Histophilus somni (strain 129Pt) (Haemophilus somnus), this protein is Iron-sulfur cluster assembly protein CyaY.